Here is a 108-residue protein sequence, read N- to C-terminus: Mitochondrial import inner membrane translocase subunit tim-13 (108 aa).

A Twin CX3C motif motif is present at residues 45 to 68 (CTNKCITAPGSSLASGEKQCLQRC). 2 disulfide bridges follow: C45/C68 and C49/C64. Positions 89–108 (EEMASSGGMGGGFGQGPSFS) are disordered. A compositionally biased stretch (gly residues) spans 95–108 (GGMGGGFGQGPSFS).

This sequence belongs to the small Tim family. Heterohexamer; composed of 3 copies of tim-8/ddp-1 and 3 copies of tin-13/tim-13, named soluble 70 kDa complex. Associates with the TIM22 complex, whose core is composed of tim-22.

The protein localises to the mitochondrion inner membrane. Mitochondrial intermembrane chaperone that participates in the import and insertion of some multi-pass transmembrane proteins into the mitochondrial inner membrane. Also required for the transfer of beta-barrel precursors from the TOM complex to the sorting and assembly machinery (SAM complex) of the outer membrane. Acts as a chaperone-like protein that protects the hydrophobic precursors from aggregation and guide them through the mitochondrial intermembrane space. The tim-8-tim-13 complex mediates the import of some proteins while the predominant tim-9/tin-9.1-tim-10/tin-10 70 kDa complex mediates the import of much more proteins. The chain is Mitochondrial import inner membrane translocase subunit tim-13 (tin-13) from Caenorhabditis elegans.